The chain runs to 567 residues: 2-succinyl-5-enolpyruvyl-6-hydroxy-3-cyclohexene-1-carboxylate synthase (567 aa).

This sequence belongs to the TPP enzyme family. MenD subfamily. In terms of assembly, homodimer. Requires Mg(2+) as cofactor. It depends on Mn(2+) as a cofactor. The cofactor is thiamine diphosphate.

The catalysed reaction is isochorismate + 2-oxoglutarate + H(+) = 5-enolpyruvoyl-6-hydroxy-2-succinyl-cyclohex-3-ene-1-carboxylate + CO2. It functions in the pathway quinol/quinone metabolism; 1,4-dihydroxy-2-naphthoate biosynthesis; 1,4-dihydroxy-2-naphthoate from chorismate: step 2/7. The protein operates within quinol/quinone metabolism; menaquinone biosynthesis. Catalyzes the thiamine diphosphate-dependent decarboxylation of 2-oxoglutarate and the subsequent addition of the resulting succinic semialdehyde-thiamine pyrophosphate anion to isochorismate to yield 2-succinyl-5-enolpyruvyl-6-hydroxy-3-cyclohexene-1-carboxylate (SEPHCHC). In Yersinia pseudotuberculosis serotype IB (strain PB1/+), this protein is 2-succinyl-5-enolpyruvyl-6-hydroxy-3-cyclohexene-1-carboxylate synthase.